The following is a 901-amino-acid chain: Clathrin coat assembly protein AP180 (901 aa).

The ENTH domain occupies 14–145; it reads QYSVTGSAVA…FSYRQMAFDF (132 aa). 4 disordered regions span residues 285–326, 397–424, 497–522, and 573–606; these read LEGK…DTSP, PISD…STTT, PETS…PSPA, and AAAP…PESS. Residues serine 296, serine 300, and serine 306 each carry the phosphoserine modification. Over residues 302–324 the composition is skewed to polar residues; sequence LSKSSPATTVTSPNSTPAKTIDT. O-linked (GlcNAc) threonine glycosylation occurs at threonine 310. Serine 313 carries the post-translational modification Phosphoserine. Position 317 is a phosphothreonine (threonine 317). 2 stretches are compositionally biased toward low complexity: residues 410-424 and 500-511; these read TTTT…STTT and SAPVVTPTASTA. Positions 512–522 are enriched in pro residues; that stretch reads PPVPATAPSPA. Residues serine 594, serine 600, serine 621, serine 627, and serine 761 each carry the phosphoserine modification. 2 disordered regions span residues 803 to 845 and 857 to 901; these read SAGV…GMTM and MMRP…KDFL. A compositionally biased stretch (low complexity) spans 835–845; that stretch reads GMPPSGTGMTM. The residue at position 859 (arginine 859) is an Asymmetric dimethylarginine; alternate. Arginine 859 is subject to Omega-N-methylarginine; alternate. A compositionally biased stretch (polar residues) spans 870-882; the sequence is TQLSPSPTPATQS. A compositionally biased stretch (basic and acidic residues) spans 887–901; it reads PAKDPLADLNIKDFL.

It belongs to the PICALM/SNAP91 family. As to quaternary structure, binds AP2A2. Interacts with AP2B1; clathrin competes with SNAP91. In terms of processing, thr-310 can be modified by the addition of N-acetylglucosamine which can be further phosphorylated. There is no evidence for direct Thr-310 phosphorylation. In terms of tissue distribution, brain. Associated with the synapses.

Its subcellular location is the cell membrane. It localises to the membrane. The protein resides in the coated pit. Adaptins are components of the adaptor complexes which link clathrin to receptors in coated vesicles. Clathrin-associated protein complexes are believed to interact with the cytoplasmic tails of membrane proteins, leading to their selection and concentration. Binding of AP180 to clathrin triskelia induces their assembly into 60-70 nm coats. This chain is Clathrin coat assembly protein AP180 (Snap91), found in Mus musculus (Mouse).